Reading from the N-terminus, the 517-residue chain is Crotonobetaine/carnitine--CoA ligase (517 aa).

It belongs to the ATP-dependent AMP-binding enzyme family.

It carries out the reaction 4-(trimethylamino)butanoate + ATP + CoA = 4-(trimethylamino)butanoyl-CoA + AMP + diphosphate. It catalyses the reaction crotonobetaine + ATP + CoA = crotonobetainyl-CoA + AMP + diphosphate. The catalysed reaction is (R)-carnitine + ATP + CoA = (R)-carnitinyl-CoA + AMP + diphosphate. The protein operates within amine and polyamine metabolism; carnitine metabolism. Catalyzes the transfer of CoA to carnitine, generating the initial carnitinyl-CoA needed for the CaiB reaction cycle. Also has activity toward crotonobetaine and gamma-butyrobetaine. The protein is Crotonobetaine/carnitine--CoA ligase of Escherichia coli O6:K15:H31 (strain 536 / UPEC).